The following is a 638-amino-acid chain: Dihydrolipoyllysine-residue acetyltransferase component of pyruvate dehydrogenase complex (638 aa).

Lipoyl-binding domains lie at 2–74 (SEII…IELE) and 117–191 (SQEV…LTLR). Residue Lys-40 is modified to N6-lipoyllysine. The span at 90 to 117 (PAAPTQAVDEAEAPSPGASATPAPAAAS) shows a compositional bias: low complexity. Residues 90–119 (PAAPTQAVDEAEAPSPGASATPAPAAASQE) form a disordered region. Lys-157 carries the N6-lipoyllysine modification. Residues 201–220 (APAAAAAASPAPAPLAPAAA) are disordered. In terms of domain architecture, Lipoyl-binding 3 spans 222–296 (PQEVKVPDIG…GTGDQILTLR (75 aa)). Position 262 is an N6-lipoyllysine (Lys-262). Low complexity predominate over residues 301 to 320 (APSGPRARGSPGQAAAAPGA). Positions 301–336 (APSGPRARGSPGQAAAAPGAAPAPAPVGAPSRNGAK) are disordered. Residues 338-375 (HAGPAVRQLAREFGVELAAINSTGPRGRILKEDVQAYV) enclose the Peripheral subunit-binding (PSBD) domain. The catalytic stretch occupies residues 382 to 638 (AKEAPAAGAA…LLADIRAILL (257 aa)). The active site involves His-611.

It belongs to the 2-oxoacid dehydrogenase family. Forms a 24-polypeptide structural core with octahedral symmetry. Requires (R)-lipoate as cofactor.

The enzyme catalyses N(6)-[(R)-dihydrolipoyl]-L-lysyl-[protein] + acetyl-CoA = N(6)-[(R)-S(8)-acetyldihydrolipoyl]-L-lysyl-[protein] + CoA. Its function is as follows. The pyruvate dehydrogenase complex catalyzes the overall conversion of pyruvate to acetyl-CoA and CO(2). It contains multiple copies of three enzymatic components: pyruvate dehydrogenase (E1), dihydrolipoamide acetyltransferase (E2) and lipoamide dehydrogenase (E3). The chain is Dihydrolipoyllysine-residue acetyltransferase component of pyruvate dehydrogenase complex from Azotobacter vinelandii.